The following is a 97-amino-acid chain: U6-theraphotoxin-Hhn1a 2 (97 aa).

A signal peptide spans 1–33 (MLIKQFSRRPKNMKVQILLAFAALFVLAVGSYA). Positions 34–61 (SESKKLDLRDASFSAMFSADYQLNPQER) are excised as a propeptide. Disulfide bonds link cysteine 63–cysteine 77, cysteine 70–cysteine 82, and cysteine 76–cysteine 89.

The protein belongs to the neurotoxin 10 (Hwtx-1) family. 12 (Hntx-12) subfamily. Expressed by the venom gland.

It localises to the secreted. Its function is as follows. Ion channel inhibitor. The polypeptide is U6-theraphotoxin-Hhn1a 2 (Cyriopagopus hainanus (Chinese bird spider)).